Reading from the N-terminus, the 108-residue chain is UPF0145 protein LCA_1282 (108 aa).

This sequence belongs to the UPF0145 family.

The chain is UPF0145 protein LCA_1282 from Latilactobacillus sakei subsp. sakei (strain 23K) (Lactobacillus sakei subsp. sakei).